We begin with the raw amino-acid sequence, 441 residues long: Probable D-serine dehydratase (441 aa).

Lys101 is subject to N6-(pyridoxal phosphate)lysine.

This sequence belongs to the serine/threonine dehydratase family. DsdA subfamily. It depends on pyridoxal 5'-phosphate as a cofactor.

The catalysed reaction is D-serine = pyruvate + NH4(+). This chain is Probable D-serine dehydratase, found in Geobacillus kaustophilus (strain HTA426).